Consider the following 247-residue polypeptide: Phycobilisome rod-core linker polypeptide CpcG2 (247 aa).

One can recognise a PBS-linker domain in the interval 11–189 (SSQNQRVPGY…YWRDKLENER (179 aa)).

The protein belongs to the phycobilisome linker protein family. As to quaternary structure, the phycobilisome is a hemidiscoidal structure that is composed of two distinct substructures: a core complex and a number of rods radiating from the core.

It localises to the cellular thylakoid membrane. Functionally, rod-core linker protein required for attachment of phycocyanin to allophycocyanin in cores of phycobilisomes. Its function is as follows. Linker polypeptides determine the state of aggregation and the location of the disk-shaped phycobiliprotein units within the phycobilisome and modulate their spectroscopic properties in order to mediate a directed and optimal energy transfer. This is Phycobilisome rod-core linker polypeptide CpcG2 (cpcG2) from Mastigocladus laminosus (Fischerella sp.).